The chain runs to 273 residues: Putative pyruvate, phosphate dikinase regulatory protein (273 aa).

149–156 serves as a coordination point for ADP; sequence GPSRTSKT.

Belongs to the pyruvate, phosphate/water dikinase regulatory protein family. PDRP subfamily.

The enzyme catalyses N(tele)-phospho-L-histidyl/L-threonyl-[pyruvate, phosphate dikinase] + ADP = N(tele)-phospho-L-histidyl/O-phospho-L-threonyl-[pyruvate, phosphate dikinase] + AMP + H(+). It carries out the reaction N(tele)-phospho-L-histidyl/O-phospho-L-threonyl-[pyruvate, phosphate dikinase] + phosphate + H(+) = N(tele)-phospho-L-histidyl/L-threonyl-[pyruvate, phosphate dikinase] + diphosphate. Bifunctional serine/threonine kinase and phosphorylase involved in the regulation of the pyruvate, phosphate dikinase (PPDK) by catalyzing its phosphorylation/dephosphorylation. The sequence is that of Putative pyruvate, phosphate dikinase regulatory protein from Rickettsia bellii (strain OSU 85-389).